Here is a 351-residue protein sequence, read N- to C-terminus: Methylthioribose-1-phosphate isomerase (351 aa).

Residues 51 to 53 (RGA), Arg94, and Gln199 contribute to the substrate site. Residue Asp240 is the Proton donor of the active site. 250–251 (NK) is a substrate binding site.

This sequence belongs to the EIF-2B alpha/beta/delta subunits family. MtnA subfamily. Homodimer.

The catalysed reaction is 5-(methylsulfanyl)-alpha-D-ribose 1-phosphate = 5-(methylsulfanyl)-D-ribulose 1-phosphate. Its pathway is amino-acid biosynthesis; L-methionine biosynthesis via salvage pathway; L-methionine from S-methyl-5-thio-alpha-D-ribose 1-phosphate: step 1/6. In terms of biological role, catalyzes the interconversion of methylthioribose-1-phosphate (MTR-1-P) into methylthioribulose-1-phosphate (MTRu-1-P). The sequence is that of Methylthioribose-1-phosphate isomerase from Bacillus cereus (strain ZK / E33L).